Here is a 278-residue protein sequence, read N- to C-terminus: Thioredoxin-related transmembrane protein 1 (278 aa).

The first 26 residues, 1-26 (MAHLGRLMVPLAALVLLLWAVPGAHG), serve as a signal peptide directing secretion. A Thioredoxin domain is found at 27-132 (RRNNVRVLTD…FINFVSDKEW (106 aa)). Over 27–181 (RRNNVRVLTD…DLGIPAWGSY (155 aa)) the chain is Extracellular. Residues cysteine 56 and cysteine 59 each act as nucleophile in the active site. Cysteines 56 and 59 form a disulfide. A helical transmembrane segment spans residues 182-202 (LVFAFATVLSGLLLGLCMIFV). At 203–278 (ADCLCPSKRR…VGLPSATDTS (76 aa)) the chain is on the cytoplasmic side. 2 S-palmitoyl cysteine lipidation sites follow: cysteine 205 and cysteine 207. A compositionally biased stretch (polar residues) spans 217–226 (QYAKKTSPEF). Positions 217–278 (QYAKKTSPEF…VGLPSATDTS (62 aa)) are disordered. Residues 235–251 (EEQEADEEDVSEEEAED) are compositionally biased toward acidic residues. Residues serine 245 and serine 278 each carry the phosphoserine modification.

In terms of assembly, interacts with ATP2A2. Post-translationally, palmitoylated; palmitoylation is required for localization to mitochondria-associated endoplasmic reticulum membrane (MAM).

The protein localises to the endoplasmic reticulum membrane. It is found in the mitochondrion membrane. Its subcellular location is the secreted. The catalysed reaction is Catalyzes the rearrangement of -S-S- bonds in proteins.. Functionally, thiredoxin domain-containing protein that participates in various redox reactions through the reversible oxidation of its active center dithiol to a disulfide and catalyze dithiol-disulfide exchange reactions. Acts as a key inhibitor of the alternative triglyceride biosynthesis pathway by inhibiting the activity of TMEM68/DIESL at the endoplasmic reticulum, thereby restricting accumulation of triacylglycerol. The alternative triglyceride biosynthesis pathway mediates formation of triacylglycerol from diacylglycerol and membrane phospholipids. Acts as a protein disulfide isomerase by catalyzing formation or reduction of disulfide bonds. Specifically mediates formation of disulfide bonds of transmembrane proteins at the endoplasmic reticulum membrane. Involved in ER-associated degradation (ERAD) via its protein disulfide isomerase activity by acting on folding-defective polypeptides at the endoplasmic reticulum membrane. Acts as a negative regulator of platelet aggregation following secretion in the extracellular space. Acts as a regulator of endoplasmic reticulum-mitochondria contact sites via its ability to regulate redox signals. Regulates endoplasmic reticulum-mitochondria Ca(2+) flux. This chain is Thioredoxin-related transmembrane protein 1, found in Mus musculus (Mouse).